Here is a 179-residue protein sequence, read N- to C-terminus: Large ribosomal subunit protein uL5 (179 aa).

It belongs to the universal ribosomal protein uL5 family. In terms of assembly, part of the 50S ribosomal subunit; part of the 5S rRNA/L5/L18/L25 subcomplex. Contacts the 5S rRNA and the P site tRNA. Forms a bridge to the 30S subunit in the 70S ribosome.

Functionally, this is one of the proteins that bind and probably mediate the attachment of the 5S RNA into the large ribosomal subunit, where it forms part of the central protuberance. In the 70S ribosome it contacts protein S13 of the 30S subunit (bridge B1b), connecting the 2 subunits; this bridge is implicated in subunit movement. Contacts the P site tRNA; the 5S rRNA and some of its associated proteins might help stabilize positioning of ribosome-bound tRNAs. This Clostridium perfringens (strain ATCC 13124 / DSM 756 / JCM 1290 / NCIMB 6125 / NCTC 8237 / Type A) protein is Large ribosomal subunit protein uL5.